The chain runs to 133 residues: Large ribosomal subunit protein bL19 (133 aa).

The interval 114–133 (IAERQMTAASKEEPAEKSEA) is disordered. Residues 123–133 (SKEEPAEKSEA) show a composition bias toward basic and acidic residues.

Belongs to the bacterial ribosomal protein bL19 family.

This protein is located at the 30S-50S ribosomal subunit interface and may play a role in the structure and function of the aminoacyl-tRNA binding site. This Phenylobacterium zucineum (strain HLK1) protein is Large ribosomal subunit protein bL19.